The following is a 35-amino-acid chain: UPF0387 membrane protein YohO (35 aa).

The chain crosses the membrane as a helical span at residues 6–26; that stretch reads IGVIALFLLMAIGGIGGVMLA.

It belongs to the UPF0387 family.

It is found in the cell inner membrane. This Salmonella paratyphi A (strain ATCC 9150 / SARB42) protein is UPF0387 membrane protein YohO.